The sequence spans 86 residues: Exodeoxyribonuclease 7 small subunit (86 aa).

Belongs to the XseB family. In terms of assembly, heterooligomer composed of large and small subunits.

Its subcellular location is the cytoplasm. The enzyme catalyses Exonucleolytic cleavage in either 5'- to 3'- or 3'- to 5'-direction to yield nucleoside 5'-phosphates.. In terms of biological role, bidirectionally degrades single-stranded DNA into large acid-insoluble oligonucleotides, which are then degraded further into small acid-soluble oligonucleotides. This is Exodeoxyribonuclease 7 small subunit from Xanthomonas oryzae pv. oryzae (strain MAFF 311018).